The sequence spans 331 residues: Phosphate acyltransferase (331 aa).

It belongs to the PlsX family. In terms of assembly, homodimer. Probably interacts with PlsY.

Its subcellular location is the cytoplasm. It carries out the reaction a fatty acyl-[ACP] + phosphate = an acyl phosphate + holo-[ACP]. It functions in the pathway lipid metabolism; phospholipid metabolism. Catalyzes the reversible formation of acyl-phosphate (acyl-PO(4)) from acyl-[acyl-carrier-protein] (acyl-ACP). This enzyme utilizes acyl-ACP as fatty acyl donor, but not acyl-CoA. In Ureaplasma parvum serovar 3 (strain ATCC 27815 / 27 / NCTC 11736), this protein is Phosphate acyltransferase.